The following is a 444-amino-acid chain: ATP-dependent protease ATPase subunit HslU (444 aa).

Residues isoleucine 18 and 60–65 (GVGKTE) contribute to the ATP site. Positions 143-163 (WGEVENHDSHSSTRQAFRKKL) are disordered. The ATP site is built by aspartate 257, glutamate 322, and arginine 394.

It belongs to the ClpX chaperone family. HslU subfamily. In terms of assembly, a double ring-shaped homohexamer of HslV is capped on each side by a ring-shaped HslU homohexamer. The assembly of the HslU/HslV complex is dependent on binding of ATP.

The protein localises to the cytoplasm. Its function is as follows. ATPase subunit of a proteasome-like degradation complex; this subunit has chaperone activity. The binding of ATP and its subsequent hydrolysis by HslU are essential for unfolding of protein substrates subsequently hydrolyzed by HslV. HslU recognizes the N-terminal part of its protein substrates and unfolds these before they are guided to HslV for hydrolysis. The sequence is that of ATP-dependent protease ATPase subunit HslU from Haemophilus influenzae (strain 86-028NP).